A 4543-amino-acid chain; its full sequence is Low-density lipoprotein receptor-related protein 1 (4543 aa).

An N-terminal signal peptide occupies residues 1–21 (MGPLLALAGCLLALLAAPAAR). Residues 22–4419 (ALEAPKTCSP…EFIVGEQQSG (4398 aa)) are Extracellular-facing. 2 LDL-receptor class A domains span residues 27–68 (KTCS…ICPQ) and 72–112 (SRCQ…HCRE). 6 cysteine pairs are disulfide-bonded: Cys-29–Cys-42, Cys-36–Cys-55, Cys-49–Cys-66, Cys-74–Cys-87, Cys-81–Cys-100, and Cys-94–Cys-110. The region spanning 113-151 (QLANCTALGCQHHCVPTLSGPACYCNNSFQLAEDRRSCK) is the EGF-like 1 domain. N-linked (GlcNAc...) asparagine glycosylation is present at Asn-116. Disulfide bonds link Cys-117–Cys-126, Cys-122–Cys-135, Cys-137–Cys-150, Cys-156–Cys-166, Cys-162–Cys-175, and Cys-177–Cys-190. N-linked (GlcNAc...) asparagine glycosylation is present at Asn-138. An EGF-like 2; calcium-binding domain is found at 152–191 (DFDECTVYGTCSQTCTNTEGSYTCSCVEGYLLQPDNRSCK). N-linked (GlcNAc...) asparagine glycosylation is found at Asn-187 and Asn-276. LDL-receptor class B repeat units follow at residues 294–336 (GNFY…DPAM), 337–380 (GKVF…DLVS), and 381–424 (RLVY…FENY). Asn-359 carries N-linked (GlcNAc...) asparagine glycosylation. Asn-448 carries N-linked (GlcNAc...) asparagine glycosylation. The EGF-like 3 domain occupies 476 to 522 (RSHACEPDQFGKPGGCSDICLLGNSHKSRTCRCRSGFSLGSDGKSCK). Disulfide bonds link Cys-480-Cys-495, Cys-491-Cys-506, and Cys-508-Cys-521. 4 LDL-receptor class B repeats span residues 573-615 (GFIY…DWMG), 616-661 (NNLY…DPLN), 662-712 (GWMY…DIPA), and 713-756 (KILY…YSSF). N-linked (GlcNAc...) asparagine glycosylation is present at Asn-731. The EGF-like 4 domain occupies 801–841 (GSNKCRVNNGGCSSLCLATPRGRQCACAEDQILGADSVTCE). 33 disulfides stabilise this stretch: Cys-805-Cys-816, Cys-812-Cys-825, Cys-827-Cys-840, Cys-852-Cys-864, Cys-859-Cys-877, Cys-871-Cys-888, Cys-893-Cys-905, Cys-900-Cys-918, Cys-912-Cys-929, Cys-934-Cys-946, Cys-941-Cys-959, Cys-953-Cys-969, Cys-974-Cys-987, Cys-982-Cys-1000, Cys-994-Cys-1009, Cys-1013-Cys-1025, Cys-1020-Cys-1038, Cys-1032-Cys-1049, Cys-1060-Cys-1073, Cys-1067-Cys-1086, Cys-1080-Cys-1095, Cys-1102-Cys-1116, Cys-1110-Cys-1129, Cys-1123-Cys-1138, Cys-1143-Cys-1157, Cys-1150-Cys-1170, Cys-1164-Cys-1180, Cys-1183-Cys-1194, Cys-1190-Cys-1204, Cys-1206-Cys-1219, Cys-1225-Cys-1235, Cys-1231-Cys-1244, and Cys-1246-Cys-1259. LDL-receptor class A domains follow at residues 850 to 890 (PQCQ…LCHQ), 891 to 931 (HTCP…TCSA), 932 to 971 (RTCSPNQFSCASGRCIPISWTCDLDDDCGDRSDESASCAY), 972 to 1011 (PTCFPLTQFTCNNGRCININWRCDNDNDCGDNSDEAGCSH), 1011 to 1051 (HSCS…NCTN), 1058 to 1097 (GGCHTDEFQCRLDGLCIPMRWRCDGDTDCMDSSDEKNCEG), 1100 to 1140 (HVCD…NCES), and 1141 to 1180 (LVCKPPSHTCANNTSICLPPEKLCDGSDDCGDGSDEGELC). Ca(2+) is bound by residues Trp-869, Asp-872, Asp-874, Asp-876, Asp-882, and Glu-883. Asn-926 carries an N-linked (GlcNAc...) asparagine glycan. Positions 1030, 1033, 1035, 1037, 1043, and 1044 each coordinate Ca(2+). A glycan (N-linked (GlcNAc...) asparagine) is linked at Asn-1048. Ca(2+) is bound by residues Trp-1078, Asp-1081, Asp-1083, Asp-1085, Asp-1091, and Glu-1092. N-linked (GlcNAc...) asparagine glycosylation is found at Asn-1152 and Asn-1153. EGF-like domains lie at 1181–1220 (DQCSLNNGGCSHNCTVAPGEGIVCSCPLGMELGADNKTCQ) and 1221–1260 (IQSYCAKHLKCSQKCEQDKYNVKCSCYEGWMLEPDGESCR). Asn-1193 and Asn-1216 each carry an N-linked (GlcNAc...) asparagine glycan. Residue Asn-1305 is glycosylated (N-linked (GlcNAc...) asparagine). LDL-receptor class B repeat units lie at residues 1307-1353 (SSLY…DWIA), 1354-1396 (GNIY…DPRY), 1397-1443 (GILF…DYLE), 1444-1488 (KRIL…YGGE), and 1489-1529 (VYWT…YHPS). The N-linked (GlcNAc...) asparagine glycan is linked to Asn-1509. The EGF-like 7 domain occupies 1534–1577 (APNPCEANGGKGPCSHLCLINYNRTLSCACPHLMKLDKDNTTCY). Disulfide bonds link Cys-1538/Cys-1551, Cys-1547/Cys-1561, and Cys-1563/Cys-1576. 4 N-linked (GlcNAc...) asparagine glycosylation sites follow: Asn-1556, Asn-1573, Asn-1614, and Asn-1643. 4 LDL-receptor class B repeats span residues 1625 to 1667 (QRIY…DWVS), 1668 to 1711 (RNLF…HPLH), 1712 to 1751 (GKLYWTDGDNISVANMDGSNRTLLFTNQRGPVGLAIDYPE), and 1752 to 1796 (SKLY…MGDK). N-linked (GlcNAc...) asparagine glycans are attached at residues Asn-1721, Asn-1731, Asn-1761, and Asn-1823. The EGF-like 8 domain maps to 1842–1883 (GSNPCSVNNGDCSQLCLPTSETSRSCMCTAGYSLKSGQQSCE). Cystine bridges form between Cys-1846-Cys-1857, Cys-1853-Cys-1867, and Cys-1869-Cys-1882. Asn-1929 is a glycosylation site (N-linked (GlcNAc...) asparagine). 4 LDL-receptor class B repeats span residues 1930–1972 (DTIY…DWIA), 1973–2015 (GNIY…HPEK), 2016–2059 (GYLF…DYED), and 2060–2103 (GKLY…FEDY). Asn-1991 and Asn-2044 each carry an N-linked (GlcNAc...) asparagine glycan. N-linked (GlcNAc...) asparagine glycosylation is found at Asn-2113 and Asn-2123. Residues 2151-2191 (GTNVCAQNNGGCQQLCLFRGGGRRTCACAHGMLSEDGVSCR) form the EGF-like 9 domain. Disulfide bonds link Cys-2155-Cys-2166, Cys-2162-Cys-2176, and Cys-2178-Cys-2190. LDL-receptor class B repeat units follow at residues 2247 to 2288 (NRIF…HRGW), 2289 to 2337 (DTLY…DECQ), 2338 to 2382 (NLMF…DHRA), 2383 to 2425 (EKIY…YGDY), and 2426 to 2467 (IFWT…VAND). Residue Asn-2466 is glycosylated (N-linked (GlcNAc...) asparagine). The region spanning 2472–2512 (ELSPCRVNNGGCQDLCLLTPKGHVNCSCRGERVLQEDFTCK) is the EGF-like 10 domain. Disulfide bonds link Cys-2476–Cys-2487, Cys-2483–Cys-2497, and Cys-2499–Cys-2511. An N-linked (GlcNAc...) asparagine glycan is attached at Asn-2496. Asn-2515 carries N-linked (GlcNAc...) asparagine glycosylation. 7 LDL-receptor class A domains span residues 2516–2557 (STCN…YCSS), 2558–2596 (RKCKKGFLHCMNGRCVASRFWCNGVDDCGDNSDEVPCNK), 2597–2635 (TSCAATEFRCRDGSCIGNSSRCNQFIDCEDASDEMNCTA), 2636–2684 (TDCS…NCPG), 2688–2730 (PKCP…RQDK), 2730–2769 (KFCYPVQFECNNHRCISKLWVCDGADDCGDGSDEDSRCRL), and 2770–2812 (TTCS…GCLY). Cystine bridges form between Cys-2518–Cys-2531, Cys-2526–Cys-2544, Cys-2538–Cys-2555, Cys-2560–Cys-2572, Cys-2567–Cys-2585, and Cys-2579–Cys-2594. Residue Asn-2595 is glycosylated (N-linked (GlcNAc...) asparagine). Disulfide bonds link Cys-2599–Cys-2611, Cys-2606–Cys-2624, Cys-2618–Cys-2633, Cys-2638–Cys-2660, Cys-2654–Cys-2673, Cys-2667–Cys-2682, Cys-2690–Cys-2702, Cys-2697–Cys-2715, Cys-2709–Cys-2724, Cys-2732–Cys-2744, Cys-2739–Cys-2757, Cys-2751–Cys-2767, Cys-2772–Cys-2785, Cys-2779–Cys-2798, and Cys-2792–Cys-2810. Asn-2614 and Asn-2632 each carry an N-linked (GlcNAc...) asparagine glycan. N-linked (GlcNAc...) asparagine glycosylation occurs at Asn-2813. LDL-receptor class A domains are found at residues 2814–2853 (NTCDEREFMCGNRQCIPKHFVCDHDDDCGDGSDESPECEY), 2854–2897 (PTCG…RCSS), and 2900–2938 (SKCNDSFFMCKNGKCIPEALLCDNNNDCADGSDELNCFI). 15 disulfide bridges follow: Cys-2816–Cys-2828, Cys-2823–Cys-2841, Cys-2835–Cys-2851, Cys-2856–Cys-2868, Cys-2863–Cys-2882, Cys-2876–Cys-2895, Cys-2902–Cys-2914, Cys-2909–Cys-2927, Cys-2921–Cys-2936, Cys-2941–Cys-2953, Cys-2949–Cys-2962, Cys-2964–Cys-2977, Cys-2983–Cys-2993, Cys-2989–Cys-3002, and Cys-3004–Cys-3018. Asn-2903 carries an N-linked (GlcNAc...) asparagine glycan. In terms of domain architecture, EGF-like 11 spans 2939–2978 (NECLNKKLSGCSQECEDLKIGYKCRCRPGFRLKDDGKTCI). The EGF-like 12; calcium-binding domain maps to 2979 to 3019 (DIDECSTTYPCSQKCINTLGSYKCLCIEGYKLKPDNPTSCK). 2 N-linked (GlcNAc...) asparagine glycosylation sites follow: Asn-3045 and Asn-3086. LDL-receptor class B repeat units follow at residues 3066-3110 (QMIY…DWVG), 3111-3153 (GNLY…DVQN), 3154-3197 (GYLY…DYIN), 3198-3240 (SRIY…FEDY), and 3241-3281 (IYWT…YHPY). Residue Asn-3176 is glycosylated (N-linked (GlcNAc...) asparagine). Asn-3261 is a glycosylation site (N-linked (GlcNAc...) asparagine). The region spanning 3287–3328 (PNHPCKTNNAGCSNLCLLSPGGGHKCACPTNFYLGSDGKTCV) is the EGF-like 13 domain. Intrachain disulfides connect Cys-3291-Cys-3302, Cys-3298-Cys-3312, and Cys-3314-Cys-3327. LDL-receptor class A domains lie at 3329–3368 (SNCTASQFVCKNDKCIPFWWKCDTEDDCGDRSDEPEDCPE), 3369–3407 (FKCRPGQFQCSTGICTNPAFICDGDNDCQDNSDEANCDI), 3408–3447 (HVCLPSQFKCTNTNRCIPGIFRCNGQDNCGDGEDEKDCPE), 3448–3488 (VTCA…NCTQ), 3489–3530 (MTCG…ECDE), 3531–3569 (RTCEPYQFRCKNNRCVPGRWQCDYDNDCGDNSDEESCTP), 3570–3608 (RPCSESEFSCANGRCIAGRWKCDGDHDCADGSDEKDCIP), 3608–3646 (PRCEFDQYQCKNGHCIPMRWRCDADADCMDGTDEEDCGT), 3649–3689 (RTCP…ECLK), 3690–3730 (FQCP…DCES), and 3736–3776 (KSCS…SCSH). An N-linked (GlcNAc...) asparagine glycan is attached at Asn-3330. 38 cysteine pairs are disulfide-bonded: Cys-3331-Cys-3343, Cys-3338-Cys-3356, Cys-3350-Cys-3366, Cys-3371-Cys-3383, Cys-3378-Cys-3396, Cys-3390-Cys-3405, Cys-3410-Cys-3423, Cys-3417-Cys-3436, Cys-3430-Cys-3445, Cys-3450-Cys-3463, Cys-3457-Cys-3476, Cys-3470-Cys-3486, Cys-3491-Cys-3504, Cys-3498-Cys-3517, Cys-3511-Cys-3528, Cys-3533-Cys-3545, Cys-3540-Cys-3558, Cys-3552-Cys-3567, Cys-3572-Cys-3584, Cys-3579-Cys-3597, Cys-3591-Cys-3606, Cys-3610-Cys-3622, Cys-3617-Cys-3635, Cys-3629-Cys-3644, Cys-3658-Cys-3676, Cys-3670-Cys-3687, Cys-3692-Cys-3706, Cys-3700-Cys-3719, Cys-3713-Cys-3728, Cys-3738-Cys-3752, Cys-3747-Cys-3765, Cys-3759-Cys-3774, Cys-3783-Cys-3796, Cys-3790-Cys-3805, Cys-3807-Cys-3820, Cys-3826-Cys-3836, Cys-3832-Cys-3845, and Cys-3847-Cys-3858. Asn-3485 carries N-linked (GlcNAc...) asparagine glycosylation. Residue Asn-3659 is glycosylated (N-linked (GlcNAc...) asparagine). EGF-like domains are found at residues 3779-3821 (KSYD…NSCQ) and 3822-3859 (DVNECLRFGTCSQLCNNTKGSHVCSCAKNFMKTDNMCK). The N-linked (GlcNAc...) asparagine glycan is linked to Asn-3786. An N-linked (GlcNAc...) asparagine glycan is attached at Asn-3837. LDL-receptor class B repeat units follow at residues 3910–3952 (NKIY…THLN), 3969–4011 (GNIY…DPLR), 4012–4055 (GTMY…DYHN), and 4056–4100 (ERLY…FEDY). Positions 3939-3942 (RNRR) match the Recognition site for proteolytical processing motif. Asn-3952 carries N-linked (GlcNAc...) asparagine glycosylation. 2 N-linked (GlcNAc...) asparagine glycosylation sites follow: Asn-4074 and Asn-4124. EGF-like domains are found at residues 4146 to 4182 (VTNPCDRKKCEWLCLLSPSGPVCTCPNGKRLDNGTCV), 4195 to 4231 (TTDTCDLVCLNGGSCFLNARKQAKCRCQPRYNGERCQ), 4231 to 4267 (QINQCSDYCQNGGLCTASPSGMPTCRCPTGFTGSRCD), 4267 to 4303 (DQQVCTNYCHNNGSCTVNQGNQPNCRCPPTFIGDRCQ), 4303 to 4339 (QYQQCFNYCENNGVCQMSRDGVKQCRCPPQFEGAQCQ), 4339 to 4374 (QDNKCSRCQEGKCNINRQSGDVSCICPDGKIAPSCL), and 4372 to 4409 (SCLTCDSYCLNGGTCSISDKTQLPECLCPLEVTGMRCE). 21 disulfides stabilise this stretch: Cys-4150/Cys-4159, Cys-4155/Cys-4168, Cys-4170/Cys-4181, Cys-4199/Cys-4209, Cys-4203/Cys-4219, Cys-4221/Cys-4230, Cys-4235/Cys-4245, Cys-4239/Cys-4255, Cys-4257/Cys-4266, Cys-4271/Cys-4281, Cys-4275/Cys-4291, Cys-4293/Cys-4302, Cys-4307/Cys-4317, Cys-4311/Cys-4327, Cys-4329/Cys-4338, Cys-4343/Cys-4351, Cys-4346/Cys-4362, Cys-4364/Cys-4373, Cys-4376/Cys-4386, Cys-4380/Cys-4397, and Cys-4399/Cys-4408. Asn-4178 is a glycosylation site (N-linked (GlcNAc...) asparagine). An N-linked (GlcNAc...) asparagine glycan is attached at Asn-4278. A helical transmembrane segment spans residues 4420–4443 (RTASIVIPILLLLLLLAVVAFAWY). Over 4444–4543 (KWRIKGAKGF…ADDDLTDPLA (100 aa)) the chain is Cytoplasmic. The NPXY motif signature appears at 4501-4506 (FTNPVY). The interval 4522-4543 (STDEKRELLARGADDDLTDPLA) is disordered. A compositionally biased stretch (basic and acidic residues) spans 4523–4535 (TDEKRELLARGAD).

This sequence belongs to the LDLR family. Binds vitellogenin and LRPAP1 (alpha 2-macroglobulin). Cleaved into a 85 kDa membrane-spanning subunit (LRP-85) and a 515 kDa large extracellular domain (LRP-515) that remains non-covalently associated. As to expression, somatic.

It is found in the membrane. The protein localises to the coated pit. Functionally, endocytic receptor involved in endocytosis and in phagocytosis of apoptotic cells. Involved in cellular lipid homeostasis. Involved in the plasma clearance of chylomicron remnants and activated LRPAP1 (alpha 2-macroglobulin), as well as the local metabolism of complexes between plasminogen activators and their endogenous inhibitors. Acts as an alpha-2-macroglobulin receptor. The chain is Low-density lipoprotein receptor-related protein 1 (LRP1) from Gallus gallus (Chicken).